Consider the following 66-residue polypeptide: Large ribosomal subunit protein bL35 (66 aa).

The span at Met1–Arg16 shows a compositional bias: basic residues. A disordered region spans residues Met1–Leu22.

It belongs to the bacterial ribosomal protein bL35 family.

The polypeptide is Large ribosomal subunit protein bL35 (Streptococcus suis (strain 05ZYH33)).